Consider the following 422-residue polypeptide: 5'-deoxyadenosine deaminase (422 aa).

Residues His57 and His59 each coordinate Zn(2+). Residues Glu86 and His178 each coordinate substrate. His205 serves as a coordination point for Zn(2+). Residues Glu208 and Asp294 each coordinate substrate. Residue Asp294 coordinates Zn(2+).

It belongs to the metallo-dependent hydrolases superfamily. MTA/SAH deaminase family. Homotetramer. It depends on Zn(2+) as a cofactor.

It catalyses the reaction 5'-deoxyadenosine + H2O + H(+) = 5'-deoxyinosine + NH4(+). The catalysed reaction is S-adenosyl-L-homocysteine + H2O + H(+) = S-inosyl-L-homocysteine + NH4(+). The enzyme catalyses S-methyl-5'-thioadenosine + H2O + H(+) = S-methyl-5'-thioinosine + NH4(+). It carries out the reaction adenosine + H2O + H(+) = inosine + NH4(+). Its pathway is amino-acid biosynthesis; S-adenosyl-L-methionine biosynthesis. Catalyzes the deamination of three SAM-derived enzymatic products, namely 5'-deoxyadenosine, S-adenosyl-L-homocysteine, and 5'-methylthioadenosine, to produce the inosine analogs. Can also deaminate adenosine. The preferred substrate for this enzyme is 5'-deoxyadenosine, but all these substrates are efficiently deaminated. Likely functions in a S-adenosyl-L-methionine (SAM) recycling pathway from S-adenosyl-L-homocysteine (SAH) produced from SAM-dependent methylation reactions. May also be involved in the recycling of 5'-deoxyadenosine, whereupon the 5'-deoxyribose moiety of 5'-deoxyinosine is further metabolized to deoxyhexoses used for the biosynthesis of aromatic amino acids in methanogens. The polypeptide is 5'-deoxyadenosine deaminase (Methanococcus maripaludis (strain DSM 14266 / JCM 13030 / NBRC 101832 / S2 / LL)).